The sequence spans 150 residues: Endoribonuclease YbeY (150 aa).

Residues His113, His117, and His123 each contribute to the Zn(2+) site.

Belongs to the endoribonuclease YbeY family. It depends on Zn(2+) as a cofactor.

Its subcellular location is the cytoplasm. Functionally, single strand-specific metallo-endoribonuclease involved in late-stage 70S ribosome quality control and in maturation of the 3' terminus of the 16S rRNA. This Syntrophotalea carbinolica (strain DSM 2380 / NBRC 103641 / GraBd1) (Pelobacter carbinolicus) protein is Endoribonuclease YbeY.